A 289-amino-acid chain; its full sequence is Acetyl-coenzyme A carboxylase carboxyl transferase subunit beta (289 aa).

In terms of domain architecture, CoA carboxyltransferase N-terminal spans 34–289 (MWVKCNKCGD…KLINMHQNSF (256 aa)). 4 residues coordinate Zn(2+): C38, C41, C57, and C60. Residues 38-60 (CNKCGDILYQNDLEKNYMVCNLC) form a C4-type zinc finger.

This sequence belongs to the AccD/PCCB family. In terms of assembly, acetyl-CoA carboxylase is a heterohexamer composed of biotin carboxyl carrier protein (AccB), biotin carboxylase (AccC) and two subunits each of ACCase subunit alpha (AccA) and ACCase subunit beta (AccD). It depends on Zn(2+) as a cofactor.

It localises to the cytoplasm. It catalyses the reaction N(6)-carboxybiotinyl-L-lysyl-[protein] + acetyl-CoA = N(6)-biotinyl-L-lysyl-[protein] + malonyl-CoA. Its pathway is lipid metabolism; malonyl-CoA biosynthesis; malonyl-CoA from acetyl-CoA: step 1/1. Its function is as follows. Component of the acetyl coenzyme A carboxylase (ACC) complex. Biotin carboxylase (BC) catalyzes the carboxylation of biotin on its carrier protein (BCCP) and then the CO(2) group is transferred by the transcarboxylase to acetyl-CoA to form malonyl-CoA. The protein is Acetyl-coenzyme A carboxylase carboxyl transferase subunit beta of Clostridium botulinum (strain Langeland / NCTC 10281 / Type F).